Consider the following 317-residue polypeptide: Aspartate carbamoyltransferase catalytic subunit (317 aa).

2 residues coordinate carbamoyl phosphate: Arg66 and Thr67. Residue Lys94 coordinates L-aspartate. Carbamoyl phosphate is bound by residues Arg116, His144, and Gln147. L-aspartate contacts are provided by Arg177 and Arg231. Positions 272 and 273 each coordinate carbamoyl phosphate.

Belongs to the aspartate/ornithine carbamoyltransferase superfamily. ATCase family. As to quaternary structure, heterododecamer (2C3:3R2) of six catalytic PyrB chains organized as two trimers (C3), and six regulatory PyrI chains organized as three dimers (R2).

The catalysed reaction is carbamoyl phosphate + L-aspartate = N-carbamoyl-L-aspartate + phosphate + H(+). The protein operates within pyrimidine metabolism; UMP biosynthesis via de novo pathway; (S)-dihydroorotate from bicarbonate: step 2/3. Catalyzes the condensation of carbamoyl phosphate and aspartate to form carbamoyl aspartate and inorganic phosphate, the committed step in the de novo pyrimidine nucleotide biosynthesis pathway. The polypeptide is Aspartate carbamoyltransferase catalytic subunit (Rhodopseudomonas palustris (strain ATCC BAA-98 / CGA009)).